Here is a 372-residue protein sequence, read N- to C-terminus: Cytochrome b (372 aa).

The next 4 membrane-spanning stretches (helical) occupy residues 25-45, 69-90, 105-125, and 170-190; these read FGSMLLTCLALQTMTGFFLAI, WMMQNLHAIGASMFFICIYIHI, WLSGTTLLIILMATAFFGYVL, and FFALHFILPFTIISMSSIHIM. Residues His-75 and His-89 each contribute to the heme b site. Residues His-174 and His-188 each contribute to the heme b site. Residue His-193 coordinates a ubiquinone. The next 4 membrane-spanning stretches (helical) occupy residues 218–238, 280–300, 312–332, and 339–358; these read HKDMLMLTIMMTALFIIMSFN, LGGAVALVLSVTILMTMPFTH, LMQFMFWTLVTTFIMITWAAT, and FTTIGQVTSILYFTFFIMNP.

The protein belongs to the cytochrome b family. As to quaternary structure, the cytochrome bc1 complex contains 3 respiratory subunits (MT-CYB, CYC1 and UQCRFS1), 2 core proteins (UQCRC1 and UQCRC2) and probably 6 low-molecular weight proteins. It depends on heme b as a cofactor.

It localises to the mitochondrion inner membrane. Component of the ubiquinol-cytochrome c reductase complex (complex III or cytochrome b-c1 complex) that is part of the mitochondrial respiratory chain. The b-c1 complex mediates electron transfer from ubiquinol to cytochrome c. Contributes to the generation of a proton gradient across the mitochondrial membrane that is then used for ATP synthesis. The chain is Cytochrome b (MT-CYB) from Pantherophis bairdi (Baird's ratsnake).